The following is a 469-amino-acid chain: CBL-interacting serine/threonine-protein kinase 16 (469 aa).

The 264-residue stretch at 15-278 folds into the Protein kinase domain; it reads YNIGRLLGTG…MSEIKMIPWF (264 aa). ATP contacts are provided by residues 21 to 29 and Lys-44; that span reads LGTGNFAKV. The active-site Proton acceptor is Asp-139. Residues 157-193 form an activation loop region; sequence DFGLSALMMPEGLGGRRGSSDDLLHTRCGTPAYVAPE. Ser-161 bears the Phosphoserine mark. Phosphothreonine is present on Thr-182. A disordered region spans residues 290–320; sequence IDETIPSPPEPPTKKKKKDLNEKEDDGASPR. In terms of domain architecture, NAF spans 317-342; sequence ASPRSFNAFQFITSMSSGFDLSNLFE. Residues 346-376 are PPI; the sequence is KPKRMFTSKFPAKSVKERLETAAREMDMRVK. The disordered stretch occupies residues 447-469; sequence DDEDDVTTNDNVDTNDNKINNVS. Residues 454-469 are compositionally biased toward low complexity; sequence TNDNVDTNDNKINNVS.

This sequence belongs to the protein kinase superfamily. CAMK Ser/Thr protein kinase family. SNF1 subfamily. Part of a K(+)-channel calcium-sensing kinase/phosphatase complex composed by a calcium sensor CBL (CBL1, CBL2, CBL3 or CBL9), a kinase CIPK (CIPK6, CIPK16 or CIPK23), a phosphatase PP2C (AIP1) and a K(+)-channel (AKT1). Interacts with AKT1, CBL1, CBL2, CBL3 and CBL9. Mn(2+) serves as cofactor.

It catalyses the reaction L-seryl-[protein] + ATP = O-phospho-L-seryl-[protein] + ADP + H(+). The enzyme catalyses L-threonyl-[protein] + ATP = O-phospho-L-threonyl-[protein] + ADP + H(+). Its function is as follows. CIPK serine-threonine protein kinases interact with CBL proteins. Binding of a CBL protein to the regulatory NAF domain of CIPK protein lead to the activation of the kinase in a calcium-dependent manner. Downstream of CBL1, CBL2, CBL3 and CBL9, regulates by phosphorylation the K(+) conductance and uptake of AKT1. The chain is CBL-interacting serine/threonine-protein kinase 16 (CIPK16) from Arabidopsis thaliana (Mouse-ear cress).